Reading from the N-terminus, the 62-residue chain is E3 SUMO-protein ligase EGR2 (62 aa).

3 C2H2-type zinc fingers span residues 1–21 (AEGC…IRIH), 27–49 (FQCA…IRTH), and 55–62 (FACDYCGR).

The protein belongs to the EGR C2H2-type zinc-finger protein family. Interacts with HCFC1. Interacts with WWP2. Interacts with UBC9. Interacts with CITED1. Interacts (via phosphorylated form) with SFN. Ubiquitinated by WWP2 leading to proteasomal degradation. Post-translationally, acetylated. May be deacetylated by HDAC6, HDAC10 or SIRT1.

The protein resides in the nucleus. Its pathway is protein modification; protein sumoylation. Sequence-specific DNA-binding transcription factor. Plays a role in hindbrain segmentation by regulating the expression of a subset of homeobox containing genes and in Schwann cell myelination by regulating the expression of genes involved in the formation and maintenance of myelin. Binds to two EGR2-consensus sites EGR2A (5'-CTGTAGGAG-3') and EGR2B (5'-ATGTAGGTG-3') in the HOXB3 enhancer and promotes HOXB3 transcriptional activation. Binds to specific DNA sites located in the promoter region of HOXA4, HOXB2 and ERBB2. Regulates hindbrain segmentation by controlling the expression of Hox genes, such as HOXA4, HOXB3 and HOXB2, and thereby specifying odd and even rhombomeres. Promotes the expression of HOXB3 in the rhombomere r5 in the hindbrain. Regulates myelination in the peripheral nervous system after birth, possibly by regulating the expression of myelin proteins, such as MPZ, and by promoting the differentiation of Schwann cells. Involved in the development of the jaw openener musculature, probably by playing a role in its innervation through trigeminal motor neurons. May play a role in adipogenesis, possibly by regulating the expression of CEBPB. Its function is as follows. E3 SUMO-protein ligase helping SUMO1 conjugation to its coregulators NAB1 and NAB2, whose sumoylation down-regulates EGR2 transcriptional activity. This is E3 SUMO-protein ligase EGR2 (EGR2) from Cerdocyon thous (Crab-eating fox).